The primary structure comprises 265 residues: Tryptophan synthase alpha chain (265 aa).

Catalysis depends on proton acceptor residues Glu48 and Asp59.

It belongs to the TrpA family. Tetramer of two alpha and two beta chains.

The catalysed reaction is (1S,2R)-1-C-(indol-3-yl)glycerol 3-phosphate + L-serine = D-glyceraldehyde 3-phosphate + L-tryptophan + H2O. It functions in the pathway amino-acid biosynthesis; L-tryptophan biosynthesis; L-tryptophan from chorismate: step 5/5. The alpha subunit is responsible for the aldol cleavage of indoleglycerol phosphate to indole and glyceraldehyde 3-phosphate. In Ruthia magnifica subsp. Calyptogena magnifica, this protein is Tryptophan synthase alpha chain.